Reading from the N-terminus, the 88-residue chain is Selenoprotein W (88 aa).

The segment at residues 10 to 13 (CGAU) is a cross-link (cysteinyl-selenocysteine (Cys-Sec); redox-active). Position 13 (selenocysteine 13) is a non-standard amino acid, selenocysteine. Residue cysteine 37 is modified to S-glutathionyl cysteine.

This sequence belongs to the SelWTH family. Selenoprotein W subfamily. As to quaternary structure, interacts with DPYSL2, PRDX1, YWHAB, YWHAG, HSP70 and HSP90. As to expression, in the embryo, expressed in the developing nervous system and in mesoderm-derived tissues such as heart and limbs. In the adult, predominantly expressed in brain, skeletal muscle and heart.

It localises to the cytoplasm. Its function is as follows. Plays a role as a glutathione (GSH)-dependent antioxidant. May be involved in a redox-related process. May play a role in the myopathies of selenium deficiency. The chain is Selenoprotein W from Mus musculus (Mouse).